Here is a 199-residue protein sequence, read N- to C-terminus: Probable molybdenum cofactor guanylyltransferase (199 aa).

GTP contacts are provided by residues 8 to 10 (LAG), Lys-20, Asp-65, and Asp-96. Asp-96 contacts Mg(2+).

This sequence belongs to the MobA family. Mg(2+) serves as cofactor.

It localises to the cytoplasm. It carries out the reaction Mo-molybdopterin + GTP + H(+) = Mo-molybdopterin guanine dinucleotide + diphosphate. Functionally, transfers a GMP moiety from GTP to Mo-molybdopterin (Mo-MPT) cofactor (Moco or molybdenum cofactor) to form Mo-molybdopterin guanine dinucleotide (Mo-MGD) cofactor. This is Probable molybdenum cofactor guanylyltransferase from Bacillus subtilis (strain 168).